Consider the following 61-residue polypeptide: ERMES regulator 1 (61 aa).

Topologically, residues 1–20 (MLPNLRRIFASFRTEEEERS) are mitochondrial intermembrane. Residues 21 to 43 (YSRKAFFHLIGYITCSVLFSWLV) form a helical membrane-spanning segment. The Cytoplasmic segment spans residues 44–61 (RKKVISSPVVSSPIHALS).

It belongs to the EMR1 family. As to quaternary structure, interacts with the ER-mitochondria encounter structure (ERMES) complex. Interacts with mdm12. Interacts with mdm34.

Its subcellular location is the mitochondrion outer membrane. Its function is as follows. Mediates the formation of endoplasmic reticulum (ER)-mitochondria encounter structure (ERMES) foci, thereby contributing to the formation of ER-mitochondrial contact sites. The sequence is that of ERMES regulator 1 from Schizosaccharomyces pombe (strain 972 / ATCC 24843) (Fission yeast).